A 211-amino-acid polypeptide reads, in one-letter code: Neuroendocrine protein 7B2 (211 aa).

A signal peptide spans 1–26 (MVSRMVSTMLSGLLFWLASGWTPAFA). The disordered stretch occupies residues 106–132 (DFSEDQGYPDPPNPCPVGKTDDGCLEN). Cys120 and Cys129 are joined by a disulfide. Phosphoserine occurs at positions 140 and 204. The tract at residues 173–211 (GGERRKRRSVNPYLQGQRLDNVVAKKSVPHFSDEDKDPE) is disordered.

The protein belongs to the 7B2 family. Interacts with PCSK2/PC2 early in the secretory pathway. Dissociation occurs at later stages. Post-translationally, proteolytically cleaved in the Golgi by a furin-like convertase to generate bioactive peptides. In terms of processing, sulfated on tyrosine residues.

Its subcellular location is the secreted. Acts as a molecular chaperone for PCSK2/PC2, preventing its premature activation in the regulated secretory pathway. Binds to inactive PCSK2 in the endoplasmic reticulum and facilitates its transport from there to later compartments of the secretory pathway where it is proteolytically matured and activated. Also required for cleavage of PCSK2 but does not appear to be involved in its folding. Plays a role in regulating pituitary hormone secretion. The C-terminal peptide inhibits PCSK2 in vitro. This is Neuroendocrine protein 7B2 (SCG5) from Pan troglodytes (Chimpanzee).